Consider the following 348-residue polypeptide: MTSGKNGITYAEAGVDIDAGNALVDRIKPAAKRTNRPGVASGLGGFGALFDLKAAGYQDPVLVAATDGVGTKLRIAIDTGLVDGVGIDLVAMCVNDLVCQGAEPLFFLDYFATGKLETDTAARIIEGIAEGCVQSGCALIGGETAEMPGMYPAGDFDLAGFAVGAMERGTALPEGVVEGDVLLGLASNGVHSNGYSLVRKLVEISGNTWESDCPFGDGKLGQALLTPTRLYVRQVLAAIRAGGVHALAHITGGGLTENLPRVLPEGMGATIDLDTWDLPPVFGWMAETGGIAEAEMLKTFNCGIGMIVVCAADRAEALAELLSAEGETVARIGTVTTTPGIAYTGKLL.

This sequence belongs to the AIR synthase family.

Its subcellular location is the cytoplasm. It catalyses the reaction 2-formamido-N(1)-(5-O-phospho-beta-D-ribosyl)acetamidine + ATP = 5-amino-1-(5-phospho-beta-D-ribosyl)imidazole + ADP + phosphate + H(+). It functions in the pathway purine metabolism; IMP biosynthesis via de novo pathway; 5-amino-1-(5-phospho-D-ribosyl)imidazole from N(2)-formyl-N(1)-(5-phospho-D-ribosyl)glycinamide: step 2/2. The protein is Phosphoribosylformylglycinamidine cyclo-ligase of Ruegeria pomeroyi (strain ATCC 700808 / DSM 15171 / DSS-3) (Silicibacter pomeroyi).